Consider the following 182-residue polypeptide: Small ribosomal subunit protein uS5 (182 aa).

One can recognise an S5 DRBM domain in the interval 16-79 (FVDRLVHINR…EAAKRGMIYV (64 aa)).

The protein belongs to the universal ribosomal protein uS5 family. As to quaternary structure, part of the 30S ribosomal subunit. Contacts proteins S4 and S8.

With S4 and S12 plays an important role in translational accuracy. In terms of biological role, located at the back of the 30S subunit body where it stabilizes the conformation of the head with respect to the body. The protein is Small ribosomal subunit protein uS5 of Bartonella quintana (strain Toulouse) (Rochalimaea quintana).